We begin with the raw amino-acid sequence, 107 residues long: Replication restart protein PriB (107 aa).

The region spanning 1–97 (MNTLELSARV…LHLQQARRIA (97 aa)) is the SSB domain.

It belongs to the PriB family. As to quaternary structure, homodimer. Interacts with PriA and DnaT. Component of the replication restart primosome. Primosome assembly occurs via a 'hand-off' mechanism. PriA binds to replication forks, subsequently PriB then DnaT bind; DnaT then displaces ssDNA to generate the helicase loading substrate.

In terms of biological role, involved in the restart of stalled replication forks, which reloads the replicative helicase on sites other than the origin of replication; the PriA-PriB pathway is the major replication restart pathway. During primosome assembly it facilitates complex formation between PriA and DnaT on DNA; stabilizes PriA on DNA. Stimulates the DNA unwinding activity of PriA helicase. The sequence is that of Replication restart protein PriB from Bordetella parapertussis (strain 12822 / ATCC BAA-587 / NCTC 13253).